A 264-amino-acid chain; its full sequence is Thiazole synthase (264 aa).

Lys-106 serves as the catalytic Schiff-base intermediate with DXP. 1-deoxy-D-xylulose 5-phosphate contacts are provided by residues Gly-167, 193–194, and 215–216; these read AG and NS.

This sequence belongs to the ThiG family. Homotetramer. Forms heterodimers with either ThiH or ThiS.

The protein localises to the cytoplasm. It catalyses the reaction [ThiS sulfur-carrier protein]-C-terminal-Gly-aminoethanethioate + 2-iminoacetate + 1-deoxy-D-xylulose 5-phosphate = [ThiS sulfur-carrier protein]-C-terminal Gly-Gly + 2-[(2R,5Z)-2-carboxy-4-methylthiazol-5(2H)-ylidene]ethyl phosphate + 2 H2O + H(+). It participates in cofactor biosynthesis; thiamine diphosphate biosynthesis. In terms of biological role, catalyzes the rearrangement of 1-deoxy-D-xylulose 5-phosphate (DXP) to produce the thiazole phosphate moiety of thiamine. Sulfur is provided by the thiocarboxylate moiety of the carrier protein ThiS. In vitro, sulfur can be provided by H(2)S. In Azotobacter vinelandii (strain DJ / ATCC BAA-1303), this protein is Thiazole synthase.